Consider the following 312-residue polypeptide: Aminoacyl tRNA synthase complex-interacting multifunctional protein 1 (312 aa).

Position 1 is an N-acetylmethionine (Met1). The residue at position 2 (Ala2) is an N-acetylalanine. Residues 6–46 (AVLKRLEQKGAEADQIIEYLKQQVSLLKEKAILQATLREEK) are required for fibroblast proliferation. The interaction with HSP90B1 stretch occupies residues 54 to 194 (KLKKEIEELK…APRTVVSGLV (141 aa)). Positions 101–114 (AVTTVSSGTKEQIK) are required for endothelial cell death. The interval 107 to 147 (SGTKEQIKGGTGDEKKAKEKIEKKGEKKEKKQQSIAGSADS) is disordered. The span at 111–138 (EQIKGGTGDEKKAKEKIEKKGEKKEKKQ) shows a compositional bias: basic and acidic residues. The segment at 114–192 (KGGTGDEKKA…EIAPRTVVSG (79 aa)) is required for endothelial cell migration. A Glycyl lysine isopeptide (Lys-Gly) (interchain with G-Cter in SUMO1) cross-link involves residue Lys137. Residue Ser140 is modified to Phosphoserine. The tRNA-binding domain maps to 151 to 252 (DVSRLDLRIG…NGSVPGDRIT (102 aa)). Lys269 carries the post-translational modification N6-succinyllysine.

Homodimer. Part of the multisynthetase complex (MSC), a multisubunit complex that groups tRNA ligases for Arg (RARS1), Asp (DARS1), Gln (QARS1), Ile (IARS1), Leu (LARS1), Lys (KARS1), Met (MARS1) the bifunctional ligase for Glu and Pro (EPRS1) and the auxiliary subunits AIMP1/p43, AIMP2/p38 and EEF1E1/p18. Interacts (via N-terminus) with RARS1 (via N-terminus). Part of a complex composed of RARS1, QARS1 and AIMP1. Interacts (via C-terminus) with SMURF2. Interacts (via N-terminus) with HSP90B1/gp96 (via C-terminus). Interacts with PSMA7. Interacts with TARS3. Cleaved by caspase-7 in response to apoptosis to produce EMAP-II.

The protein localises to the nucleus. It is found in the cytoplasm. It localises to the cytosol. The protein resides in the secreted. Its subcellular location is the endoplasmic reticulum. The protein localises to the golgi apparatus. Functionally, non-catalytic component of the multisynthase complex. Stimulates the catalytic activity of cytoplasmic arginyl-tRNA synthase. Binds tRNA. Possesses inflammatory cytokine activity. Negatively regulates TGF-beta signaling through stabilization of SMURF2 by binding to SMURF2 and inhibiting its SMAD7-mediated degradation. Involved in glucose homeostasis through induction of glucagon secretion at low glucose levels. Promotes dermal fibroblast proliferation and wound repair. Regulates KDELR1-mediated retention of HSP90B1/gp96 in the endoplasmic reticulum. Plays a role in angiogenesis by inducing endothelial cell migration at low concentrations and endothelian cell apoptosis at high concentrations. Induces maturation of dendritic cells and monocyte cell adhesion. Modulates endothelial cell responses by degrading HIF-1A through interaction with PSMA7. This chain is Aminoacyl tRNA synthase complex-interacting multifunctional protein 1 (AIMP1), found in Homo sapiens (Human).